A 26-amino-acid polypeptide reads, in one-letter code: Toxin TdII-1 (26 aa).

Belongs to the long (4 C-C) scorpion toxin superfamily. Sodium channel inhibitor family. Beta subfamily. Expressed by the venom gland.

The protein localises to the secreted. Beta toxins bind voltage-independently at site-4 of sodium channels (Nav) and shift the voltage of activation toward more negative potentials thereby affecting sodium channel activation and promoting spontaneous and repetitive firing. This toxin is active against mammals and crustaceans. The polypeptide is Toxin TdII-1 (Tityus discrepans (Venezuelan scorpion)).